A 432-amino-acid chain; its full sequence is Adenylosuccinate synthetase (432 aa).

GTP is bound by residues Gly13–Lys19 and Gly41–Thr43. The active-site Proton acceptor is the Asp14. Mg(2+) is bound by residues Asp14 and Gly41. IMP-binding positions include Asp14–Lys17, Asn39–His42, Thr130, Arg144, Gln225, Thr240, and Arg304. The Proton donor role is filled by His42. Ala300–Arg306 is a substrate binding site. GTP-binding positions include Arg306, Lys332–Asp334, and Ser415–Gly417.

It belongs to the adenylosuccinate synthetase family. In terms of assembly, homodimer. Requires Mg(2+) as cofactor.

The protein resides in the cytoplasm. It catalyses the reaction IMP + L-aspartate + GTP = N(6)-(1,2-dicarboxyethyl)-AMP + GDP + phosphate + 2 H(+). Its pathway is purine metabolism; AMP biosynthesis via de novo pathway; AMP from IMP: step 1/2. Plays an important role in the de novo pathway of purine nucleotide biosynthesis. Catalyzes the first committed step in the biosynthesis of AMP from IMP. The chain is Adenylosuccinate synthetase from Haemophilus influenzae (strain ATCC 51907 / DSM 11121 / KW20 / Rd).